A 374-amino-acid polypeptide reads, in one-letter code: 3-dehydroquinate synthase (374 aa).

The protein belongs to the archaeal-type DHQ synthase family.

The catalysed reaction is 2-amino-2,3,7-trideoxy-D-lyxo-hept-6-ulosonate + NAD(+) + H2O = 3-dehydroquinate + NH4(+) + NADH + H(+). Catalyzes the oxidative deamination and cyclization of 2-amino-3,7-dideoxy-D-threo-hept-6-ulosonic acid (ADH) to yield 3-dehydroquinate (DHQ), which is fed into the canonical shikimic pathway of aromatic amino acid biosynthesis. This is 3-dehydroquinate synthase from Methanocella arvoryzae (strain DSM 22066 / NBRC 105507 / MRE50).